Reading from the N-terminus, the 89-residue chain is Bombyxin B-1 (89 aa).

A signal peptide spans 1-19; it reads MKTSVMFMLVIVISLMCSG. Disulfide bonds link C29–C75, C41–C88, and C74–C79. The propeptide at 48–66 is c peptide like; it reads GGAQYAPYFWTRQYLGSRG.

The protein belongs to the insulin family. As to quaternary structure, heterodimer of a B chain and an A chain linked by two disulfide bonds.

The protein localises to the secreted. Functionally, brain peptide responsible for activation of prothoracic glands to produce ecdysone in insects. This chain is Bombyxin B-1 (BBXB1), found in Bombyx mori (Silk moth).